The sequence spans 300 residues: Geranylgeranyl pyrophosphate synthase (300 aa).

Methionine 1 carries the post-translational modification N-acetylmethionine. Isopentenyl diphosphate is bound by residues lysine 25, arginine 28, and histidine 57. Aspartate 64 and aspartate 68 together coordinate Mg(2+). Position 73 (arginine 73) interacts with dimethylallyl diphosphate. An isopentenyl diphosphate-binding site is contributed by arginine 74. Dimethylallyl diphosphate-binding residues include lysine 151, threonine 152, glutamine 185, lysine 202, and lysine 212.

It belongs to the FPP/GGPP synthase family. Homohexamer; trimer of homodimers. Requires Mg(2+) as cofactor.

It localises to the cytoplasm. Its subcellular location is the perinuclear region. The protein resides in the myofibril. It is found in the sarcomere. The protein localises to the z line. The enzyme catalyses isopentenyl diphosphate + dimethylallyl diphosphate = (2E)-geranyl diphosphate + diphosphate. It catalyses the reaction isopentenyl diphosphate + (2E)-geranyl diphosphate = (2E,6E)-farnesyl diphosphate + diphosphate. It carries out the reaction isopentenyl diphosphate + (2E,6E)-farnesyl diphosphate = (2E,6E,10E)-geranylgeranyl diphosphate + diphosphate. Its pathway is isoprenoid biosynthesis; farnesyl diphosphate biosynthesis; farnesyl diphosphate from geranyl diphosphate and isopentenyl diphosphate: step 1/1. It participates in isoprenoid biosynthesis; geranyl diphosphate biosynthesis; geranyl diphosphate from dimethylallyl diphosphate and isopentenyl diphosphate: step 1/1. It functions in the pathway isoprenoid biosynthesis; geranylgeranyl diphosphate biosynthesis; geranylgeranyl diphosphate from farnesyl diphosphate and isopentenyl diphosphate: step 1/1. Catalyzes the trans-addition of the three molecules of isopentenyl diphosphate (IPP) onto dimethylallyl pyrophosphate (DMAPP) to form geranylgeranyl pyrophosphate, an important precursor of carotenoids and geranylated proteins. This is Geranylgeranyl pyrophosphate synthase from Mus musculus (Mouse).